The chain runs to 229 residues: Translation initiation factor 6 (229 aa).

The protein belongs to the eIF-6 family.

In terms of biological role, binds to the 50S ribosomal subunit and prevents its association with the 30S ribosomal subunit to form the 70S initiation complex. This is Translation initiation factor 6 from Thermococcus kodakarensis (strain ATCC BAA-918 / JCM 12380 / KOD1) (Pyrococcus kodakaraensis (strain KOD1)).